Here is a 318-residue protein sequence, read N- to C-terminus: Glutathione synthetase (318 aa).

The ATP-grasp domain maps to 129-314 (KLAITEFPDL…VPEMFAVALE (186 aa)). ATP is bound at residue 155–211 (HAAQGDVIVKPLDDMGGTGIFRLQRSEPNLNAILETLTDNGTRTIMAQRYIPEIVKG). Residues Glu285 and Asn287 each coordinate Mg(2+).

Belongs to the prokaryotic GSH synthase family. The cofactor is Mg(2+). It depends on Mn(2+) as a cofactor.

The catalysed reaction is gamma-L-glutamyl-L-cysteine + glycine + ATP = glutathione + ADP + phosphate + H(+). Its pathway is sulfur metabolism; glutathione biosynthesis; glutathione from L-cysteine and L-glutamate: step 2/2. In Bordetella pertussis (strain Tohama I / ATCC BAA-589 / NCTC 13251), this protein is Glutathione synthetase.